Here is a 371-residue protein sequence, read N- to C-terminus: MTTRRTGRAEKTLRETTAMPTADHRAAPGITLACALEEWAGEDARRRDVAATLNALAAGTIQIARAIAEGPLAGDLARTLSSGEAGEGQKALDIISNDMVIDALRKAPVAAVASEENDAPVLLDPEAPLLVAIDPLDGSSNIDTDISVGTIFAVFPHQDGTDAASVTAFLQNGRDMLAGGYVIYGPHTALMLTVGAGTWHFALDRDGSFRLVNAAVRVKEDAAEFAINMSNYHHWDDPIRAYVDDCLAGRKGPREREFNMRWVASMVADAHRIFQRGGIYLYPGDGRKGYTHGRLRLLYEAFPVAFLMEQAQGSAIDGRSSILDLSATGVHQRVPFIFGSRDEVARAARYHLEPSGHGERSPLFARRGLFI.

Residues E115, D134, L136, and D137 each contribute to the Mg(2+) site. Residues D137–S140, N228, and Y280–Y282 each bind substrate. E300 is a binding site for Mg(2+).

This sequence belongs to the FBPase class 1 family. Homotetramer. Mg(2+) is required as a cofactor.

It localises to the cytoplasm. The enzyme catalyses beta-D-fructose 1,6-bisphosphate + H2O = beta-D-fructose 6-phosphate + phosphate. It functions in the pathway carbohydrate biosynthesis; gluconeogenesis. The polypeptide is Fructose-1,6-bisphosphatase class 1 1 (Xanthobacter autotrophicus (strain ATCC BAA-1158 / Py2)).